The following is a 102-amino-acid chain: Acid shock protein (102 aa).

Positions 1–21 are cleaved as a signal peptide; the sequence is MKKVLALVVAAAMGLSSAAFA. Residues 22 to 41 show a composition bias toward low complexity; sequence AETATTPAPTATTTKAAPAK. The propeptide occupies 22–58; that stretch reads AETATTPAPTATTTKAAPAKTTHHKKQHKAAPAQKAQ. Positions 22 to 102 are disordered; it reads AETATTPAPT…PAKPAAQPAA (81 aa). Basic residues predominate over residues 80-90; it reads AAKKHAKKHSH. The segment covering 91-102 has biased composition (low complexity); the sequence is QQPAKPAAQPAA.

Belongs to the Asr family. In terms of processing, proteolytic processing gives rise to the active protein.

It is found in the periplasm. Functionally, required for growth and/or survival at acidic conditions. The polypeptide is Acid shock protein (Escherichia coli O17:K52:H18 (strain UMN026 / ExPEC)).